A 1944-amino-acid polypeptide reads, in one-letter code: Anaphase-promoting complex subunit 1 (1944 aa).

Phosphoserine is present on residues serine 51 and serine 60. Phosphothreonine is present on threonine 291. The interval 312 to 343 (ESPVASPFQNYSSIHSQSRSTSSPSLHSRSPS) is disordered. Residues serine 313, serine 341, serine 343, serine 355, serine 362, serine 373, and serine 377 each carry the phosphoserine modification. A compositionally biased stretch (low complexity) spans 323–343 (SSIHSQSRSTSSPSLHSRSPS). A disordered region spans residues 370–395 (NLSSHSQSPKRHSISHSPSGSFNDSF). The segment covering 384 to 393 (SHSPSGSFND) has biased composition (polar residues). Threonine 537 is subject to Phosphothreonine. Phosphoserine occurs at positions 547 and 555. Tyrosine 571 carries the phosphotyrosine modification. Phosphoserine occurs at positions 680, 686, and 688. Positions 991–1014 (NLPRGKSVLSSEVSSGTEAEEEDD) are disordered. The span at 998 to 1007 (VLSSEVSSGT) shows a compositional bias: polar residues. 4 PC repeats span residues 1297 to 1325 (AAGL…PEQL), 1366 to 1404 (GATL…PEFL), 1467 to 1501 (GACL…YLSA), and 1520 to 1552 (LLSL…EMNY).

Belongs to the APC1 family. As to quaternary structure, the mammalian APC/C is composed at least of 14 distinct subunits ANAPC1, ANAPC2, CDC27/APC3, ANAPC4, ANAPC5, CDC16/APC6, ANAPC7, CDC23/APC8, ANAPC10, ANAPC11, CDC26/APC12, ANAPC13, ANAPC15 and ANAPC16 that assemble into a complex of at least 19 chains with a combined molecular mass of around 1.2 MDa; APC/C interacts with FZR1 and FBXO5. Post-translationally, phosphorylated. Phosphorylation on Ser-355 occurs specifically during mitosis. As to expression, abundantly expressed in proliferating fibroblasts, juvenile testis, adult brain and epididymis.

The protein operates within protein modification; protein ubiquitination. Its function is as follows. Component of the anaphase promoting complex/cyclosome (APC/C), a cell cycle-regulated E3 ubiquitin ligase that controls progression through mitosis and the G1 phase of the cell cycle. The APC/C complex acts by mediating ubiquitination and subsequent degradation of target proteins: it mainly mediates the formation of 'Lys-11'-linked polyubiquitin chains and, to a lower extent, the formation of 'Lys-48'- and 'Lys-63'-linked polyubiquitin chains. The APC/C complex catalyzes assembly of branched 'Lys-11'-/'Lys-48'-linked branched ubiquitin chains on target proteins. The polypeptide is Anaphase-promoting complex subunit 1 (Anapc1) (Mus musculus (Mouse)).